We begin with the raw amino-acid sequence, 328 residues long: Small neutral protease regulatory protein (328 aa).

Residues 1–60 (MELEVRHLRALCAIADAGSLHRAARRLGVAQPTLSTQLTRIEQALGGPLFTRERTGCRPT) enclose the HTH lysR-type domain. Positions 20–39 (LHRAARRLGVAQPTLSTQLT) form a DNA-binding region, H-T-H motif.

The protein belongs to the LysR transcriptional regulatory family.

Its function is as follows. Transcriptional trans-activator of the gene (mprA) for the small neutral protease. This Streptomyces coelicolor (strain ATCC BAA-471 / A3(2) / M145) protein is Small neutral protease regulatory protein (mprR).